The sequence spans 390 residues: Chorismate synthase (390 aa).

Positions 40 and 46 each coordinate NADP(+). FMN-binding positions include 128 to 130, 251 to 252, glycine 296, 311 to 315, and arginine 339; these read RAS, QA, and KPIPT.

The protein belongs to the chorismate synthase family. Homotetramer. It depends on FMNH2 as a cofactor.

It carries out the reaction 5-O-(1-carboxyvinyl)-3-phosphoshikimate = chorismate + phosphate. It participates in metabolic intermediate biosynthesis; chorismate biosynthesis; chorismate from D-erythrose 4-phosphate and phosphoenolpyruvate: step 7/7. Catalyzes the anti-1,4-elimination of the C-3 phosphate and the C-6 proR hydrogen from 5-enolpyruvylshikimate-3-phosphate (EPSP) to yield chorismate, which is the branch point compound that serves as the starting substrate for the three terminal pathways of aromatic amino acid biosynthesis. This reaction introduces a second double bond into the aromatic ring system. The protein is Chorismate synthase of Sulfurihydrogenibium sp. (strain YO3AOP1).